Here is a 534-residue protein sequence, read N- to C-terminus: Replication factor C large subunit (534 aa).

ATP is bound at residue 45–52; the sequence is GPPGIGKT. Residues 444–463 are compositionally biased toward basic and acidic residues; sequence KNKKEIKVKTKKDTVEDSSK. A disordered region spans residues 444-534; it reads KNKKEIKVKT…KSRQTTLFDF (91 aa). Low complexity predominate over residues 488–510; sequence SSNSTTKNKTESPKNSSKTSSKT. Residues 517–527 are compositionally biased toward basic residues; that stretch reads TSKKNNKKKSR.

It belongs to the activator 1 small subunits family. RfcL subfamily. Heteromultimer composed of small subunits (RfcS) and large subunits (RfcL).

Its function is as follows. Part of the RFC clamp loader complex which loads the PCNA sliding clamp onto DNA. This is Replication factor C large subunit from Methanosphaera stadtmanae (strain ATCC 43021 / DSM 3091 / JCM 11832 / MCB-3).